The primary structure comprises 260 residues: 1-(5-phosphoribosyl)-5-[(5-phosphoribosylamino)methylideneamino] imidazole-4-carboxamide isomerase (260 aa).

Asp8 functions as the Proton acceptor in the catalytic mechanism. Asp130 (proton donor) is an active-site residue.

This sequence belongs to the HisA/HisF family.

It is found in the cytoplasm. The catalysed reaction is 1-(5-phospho-beta-D-ribosyl)-5-[(5-phospho-beta-D-ribosylamino)methylideneamino]imidazole-4-carboxamide = 5-[(5-phospho-1-deoxy-D-ribulos-1-ylimino)methylamino]-1-(5-phospho-beta-D-ribosyl)imidazole-4-carboxamide. Its pathway is amino-acid biosynthesis; L-histidine biosynthesis; L-histidine from 5-phospho-alpha-D-ribose 1-diphosphate: step 4/9. This chain is 1-(5-phosphoribosyl)-5-[(5-phosphoribosylamino)methylideneamino] imidazole-4-carboxamide isomerase, found in Chlorobaculum tepidum (strain ATCC 49652 / DSM 12025 / NBRC 103806 / TLS) (Chlorobium tepidum).